The primary structure comprises 324 residues: Acetyl-coenzyme A carboxylase carboxyl transferase subunit alpha (324 aa).

The CoA carboxyltransferase C-terminal domain maps to 37–291; that stretch reads ILEEKLENLE…DLMIRKTFEQ (255 aa).

This sequence belongs to the AccA family. As to quaternary structure, acetyl-CoA carboxylase is a heterohexamer composed of biotin carboxyl carrier protein (AccB), biotin carboxylase (AccC) and two subunits each of ACCase subunit alpha (AccA) and ACCase subunit beta (AccD).

Its subcellular location is the cytoplasm. It carries out the reaction N(6)-carboxybiotinyl-L-lysyl-[protein] + acetyl-CoA = N(6)-biotinyl-L-lysyl-[protein] + malonyl-CoA. It functions in the pathway lipid metabolism; malonyl-CoA biosynthesis; malonyl-CoA from acetyl-CoA: step 1/1. Its function is as follows. Component of the acetyl coenzyme A carboxylase (ACC) complex. First, biotin carboxylase catalyzes the carboxylation of biotin on its carrier protein (BCCP) and then the CO(2) group is transferred by the carboxyltransferase to acetyl-CoA to form malonyl-CoA. This Bacillus cereus (strain B4264) protein is Acetyl-coenzyme A carboxylase carboxyl transferase subunit alpha.